The sequence spans 235 residues: Phosphoribosylaminoimidazole-succinocarboxamide synthase (235 aa).

It belongs to the SAICAR synthetase family.

The enzyme catalyses 5-amino-1-(5-phospho-D-ribosyl)imidazole-4-carboxylate + L-aspartate + ATP = (2S)-2-[5-amino-1-(5-phospho-beta-D-ribosyl)imidazole-4-carboxamido]succinate + ADP + phosphate + 2 H(+). Its pathway is purine metabolism; IMP biosynthesis via de novo pathway; 5-amino-1-(5-phospho-D-ribosyl)imidazole-4-carboxamide from 5-amino-1-(5-phospho-D-ribosyl)imidazole-4-carboxylate: step 1/2. The sequence is that of Phosphoribosylaminoimidazole-succinocarboxamide synthase from Lachnoclostridium phytofermentans (strain ATCC 700394 / DSM 18823 / ISDg) (Clostridium phytofermentans).